The chain runs to 308 residues: Elongation factor Ts (308 aa).

The involved in Mg(2+) ion dislocation from EF-Tu stretch occupies residues 80 to 83 (TDFV).

Belongs to the EF-Ts family.

Its subcellular location is the cytoplasm. Functionally, associates with the EF-Tu.GDP complex and induces the exchange of GDP to GTP. It remains bound to the aminoacyl-tRNA.EF-Tu.GTP complex up to the GTP hydrolysis stage on the ribosome. The sequence is that of Elongation factor Ts from Allorhizobium ampelinum (strain ATCC BAA-846 / DSM 112012 / S4) (Agrobacterium vitis (strain S4)).